Here is a 920-residue protein sequence, read N- to C-terminus: Isoleucine--tRNA ligase (920 aa).

The 'HIGH' region signature appears at 58–68; that stretch reads PYANGHLHLGH. Glutamate 569 lines the L-isoleucyl-5'-AMP pocket. The 'KMSKS' region signature appears at 610–614; that stretch reads KMSKS. Lysine 613 is an ATP binding site. Zn(2+)-binding residues include cysteine 895, cysteine 898, cysteine 910, and cysteine 913.

The protein belongs to the class-I aminoacyl-tRNA synthetase family. IleS type 1 subfamily. In terms of assembly, monomer. Requires Zn(2+) as cofactor.

The protein resides in the cytoplasm. It catalyses the reaction tRNA(Ile) + L-isoleucine + ATP = L-isoleucyl-tRNA(Ile) + AMP + diphosphate. Its function is as follows. Catalyzes the attachment of isoleucine to tRNA(Ile). As IleRS can inadvertently accommodate and process structurally similar amino acids such as valine, to avoid such errors it has two additional distinct tRNA(Ile)-dependent editing activities. One activity is designated as 'pretransfer' editing and involves the hydrolysis of activated Val-AMP. The other activity is designated 'posttransfer' editing and involves deacylation of mischarged Val-tRNA(Ile). This chain is Isoleucine--tRNA ligase, found in Helicobacter pylori (strain J99 / ATCC 700824) (Campylobacter pylori J99).